A 670-amino-acid chain; its full sequence is Nitrate import ATP-binding protein NrtC (670 aa).

In terms of domain architecture, ABC transporter spans 5–239 (IEIDHVDRIF…RPRHRLEVVN (235 aa)). 42-49 (GHSGCGKS) contributes to the ATP binding site. The segment at 255–278 (NQQKRAKKVGAVSQFAEAMGGNGL) is linker. Residues 279-670 (EKINLDLGFI…LIDQIDQVNQ (392 aa)) are nrtA-like.

Belongs to the ABC transporter superfamily. Nitrate/nitrite/cyanate uptake transporter (NitT) (TC 3.A.1.16) family. The complex is composed of two ATP-binding proteins (NrtC and NrtD), two transmembrane proteins (NrtB) and a solute-binding protein (NrtA).

The protein resides in the cell inner membrane. The catalysed reaction is nitrate(out) + ATP + H2O = nitrate(in) + ADP + phosphate + H(+). Part of the ABC transporter complex NrtABCD involved in nitrate uptake. The complex is probably also involved in nitrite transport. Probably responsible for energy coupling to the transport system. The sequence is that of Nitrate import ATP-binding protein NrtC (nrtC) from Synechocystis sp. (strain ATCC 27184 / PCC 6803 / Kazusa).